A 284-amino-acid chain; its full sequence is 4-hydroxybenzoate octaprenyltransferase (284 aa).

7 helical membrane passes run 13-32 (FNRPIGSFLLMWPTLWALWL), 90-110 (ALMLFCALSILSFILVLFTDL), 112-132 (TILLSFVGLGLAALYPFMKRY), 134-154 (HLPQLFLGLAFSWAIPMAYSA), 164-184 (LWMLFVANCFWTIAYDTYYAM), 200-220 (ILFGQYDLFVIICLQGLTLSL), and 224-244 (IGLLAGLHWLYFVSLIVCVGL).

The protein belongs to the UbiA prenyltransferase family. Mg(2+) is required as a cofactor.

It is found in the cell inner membrane. It catalyses the reaction all-trans-octaprenyl diphosphate + 4-hydroxybenzoate = 4-hydroxy-3-(all-trans-octaprenyl)benzoate + diphosphate. It functions in the pathway cofactor biosynthesis; ubiquinone biosynthesis. Catalyzes the prenylation of para-hydroxybenzoate (PHB) with an all-trans polyprenyl group. Mediates the second step in the final reaction sequence of ubiquinone-8 (UQ-8) biosynthesis, which is the condensation of the polyisoprenoid side chain with PHB, generating the first membrane-bound Q intermediate 3-octaprenyl-4-hydroxybenzoate. In Marinomonas sp. (strain MWYL1), this protein is 4-hydroxybenzoate octaprenyltransferase.